A 488-amino-acid chain; its full sequence is Ribulose bisphosphate carboxylase large chain (488 aa).

Substrate is bound by residues N128 and T178. Catalysis depends on K180, which acts as the Proton acceptor. K182 is a substrate binding site. Positions 206, 208, and 209 each coordinate Mg(2+). K206 bears the N6-carboxylysine mark. Residue H298 is the Proton acceptor of the active site. Positions 299, 331, and 383 each coordinate substrate.

This sequence belongs to the RuBisCO large chain family. Type I subfamily. As to quaternary structure, heterohexadecamer of 8 large chains and 8 small chains. Mg(2+) serves as cofactor.

It carries out the reaction 2 (2R)-3-phosphoglycerate + 2 H(+) = D-ribulose 1,5-bisphosphate + CO2 + H2O. The enzyme catalyses D-ribulose 1,5-bisphosphate + O2 = 2-phosphoglycolate + (2R)-3-phosphoglycerate + 2 H(+). RuBisCO catalyzes two reactions: the carboxylation of D-ribulose 1,5-bisphosphate, the primary event in carbon dioxide fixation, as well as the oxidative fragmentation of the pentose substrate. Both reactions occur simultaneously and in competition at the same active site. The polypeptide is Ribulose bisphosphate carboxylase large chain (Variovorax paradoxus (strain S110)).